A 110-amino-acid chain; its full sequence is Ribonuclease P protein component 1 (110 aa).

This sequence belongs to the eukaryotic/archaeal RNase P protein component 1 family. In terms of assembly, consists of a catalytic RNA component and at least 4-5 protein subunits.

The protein resides in the cytoplasm. The catalysed reaction is Endonucleolytic cleavage of RNA, removing 5'-extranucleotides from tRNA precursor.. Part of ribonuclease P, a protein complex that generates mature tRNA molecules by cleaving their 5'-ends. The protein is Ribonuclease P protein component 1 of Methanosarcina acetivorans (strain ATCC 35395 / DSM 2834 / JCM 12185 / C2A).